A 238-amino-acid polypeptide reads, in one-letter code: Covalently-linked cell wall protein 14 (238 aa).

The signal sequence occupies residues 1–22; the sequence is MRATTLLSSVVSLALLSKEVLA. Residues 23-110 enclose the CFEM domain; sequence TPPACLLACV…ASSSSKASSS (88 aa). Cystine bridges form between Cys27-Cys67, Cys31-Cys62, Cys42-Cys50, and Cys52-Cys83. Asn87 is a glycosylation site (N-linked (GlcNAc...) asparagine). The segment at 91 to 203 is disordered; it reads GDSSSSASSS…TVSQETVSSA (113 aa). Residues 93–203 show a composition bias toward low complexity; sequence SSSSASSSAS…TVSQETVSSA (111 aa). Residue Lys161 forms a Glycyl lysine isopeptide (Lys-Gly) (interchain with G-Cter in ubiquitin) linkage. A lipid anchor (GPI-anchor amidated glycine) is attached at Gly217. Residues 218–238 constitute a propeptide, removed in mature form; that stretch reads SGNVLEAGKSVFIAAVAAMLI.

It belongs to the CCW14 family. Post-translationally, extensively O-glycosylated. In terms of processing, the GPI-anchor is attached to the protein in the endoplasmic reticulum and serves to target the protein to the cell surface. There, the glucosamine-inositol phospholipid moiety is cleaved off and the GPI-modified mannoprotein is covalently attached via its lipidless GPI glycan remnant to the 1,6-beta-glucan of the outer cell wall layer.

The protein localises to the secreted. The protein resides in the cell wall. Its subcellular location is the membrane. Its function is as follows. Component of the inner layer of the cell wall. The polypeptide is Covalently-linked cell wall protein 14 (CCW14) (Saccharomyces cerevisiae (strain ATCC 204508 / S288c) (Baker's yeast)).